Reading from the N-terminus, the 272-residue chain is Cyclase-like protein 2 (272 aa).

Residues 1–17 (MAHLATVVLLLVAAARQ) form the signal peptide.

The protein belongs to the Cyclase 1 superfamily. In terms of tissue distribution, highly expressed in leaf sheaths and flag leaves. Expressed in roots, stems, leaf collars, glumes, young panicles and pistils.

The protein localises to the secreted. It is found in the extracellular space. It localises to the extracellular matrix. In terms of biological role, may be involved in response to stresses. The polypeptide is Cyclase-like protein 2 (Oryza sativa subsp. japonica (Rice)).